The sequence spans 103 residues: Putative membrane protein insertion efficiency factor (103 aa).

It belongs to the UPF0161 family.

It is found in the cell inner membrane. Its function is as follows. Could be involved in insertion of integral membrane proteins into the membrane. The sequence is that of Putative membrane protein insertion efficiency factor from Chlamydia felis (strain Fe/C-56) (Chlamydophila felis).